A 168-amino-acid chain; its full sequence is Cilia- and flagella-associated protein HOATZ (168 aa).

The tract at residues 142–168 (PKDKVPKSKEVLSESGLRDQEEVKALE) is disordered.

It belongs to the HOATZ family. Specifically expressed in tissues with motile cilia and flagella, such as brain ependyma, lung, testis, and oviduct but not in whole brain, liver,kidney, spleen, and eyeball.

The protein localises to the cytoplasm. It is found in the cell projection. Its subcellular location is the cilium. Functionally, required for motile ciliogenesis and flagellar genesis by mediating the maturation of the glycolytic enzyme ENO4. The chain is Cilia- and flagella-associated protein HOATZ from Mus musculus (Mouse).